We begin with the raw amino-acid sequence, 461 residues long: Cysteine--tRNA ligase (461 aa).

Cysteine 29 serves as a coordination point for Zn(2+). The short motif at 31–41 (MTVYDFCHIGH) is the 'HIGH' region element. Zn(2+) contacts are provided by cysteine 210, histidine 235, and glutamate 239. The 'KMSKS' region signature appears at 267-271 (KMSKS). ATP is bound at residue lysine 270.

Belongs to the class-I aminoacyl-tRNA synthetase family. Monomer. Zn(2+) serves as cofactor.

It localises to the cytoplasm. The catalysed reaction is tRNA(Cys) + L-cysteine + ATP = L-cysteinyl-tRNA(Cys) + AMP + diphosphate. The polypeptide is Cysteine--tRNA ligase (Azotobacter vinelandii (strain DJ / ATCC BAA-1303)).